Here is a 93-residue protein sequence, read N- to C-terminus: Sm-like protein LSM2 (93 aa).

The 75-residue stretch at 2–76 folds into the Sm domain; it reads LFFSYFKDLV…VRYVQLPKDG (75 aa).

Belongs to the snRNP Sm proteins family. As to quaternary structure, component of the heptameric LSM1-LSM7 complex that forms a seven-membered ring structure with a donut shape. The LSM subunits are arranged in the order LSM1, LSM2, LSM3, LSM6, LSM5, LSM7 and LSM4. LSM2 subunit interacts only with its two neighboring subunits, LSM1A or LSM1B and LSM3A or LSM3B. Component of the heptameric LSM2-LSM8 complex that forms a seven-membered ring structure with a donut shape. The LSM subunits are arranged in the order LSM8, LSM2, LSM3, LSM6, LSM5, LSM7 and LSM4. LSM2 subunit interacts only with its two neighboring subunits, LSM8 and LSM3A or LSM3B. As to expression, expressed in roots, leaves, stems, flowers and siliques.

It localises to the cytoplasm. It is found in the nucleus. Its function is as follows. Component of LSM protein complexes, which are involved in RNA processing. Component of the cytoplasmic LSM1-LSM7 complex which is involved in mRNA degradation by promoting decapping and leading to accurate 5'-3' mRNA decay. The cytoplasmic LSM1-LSM7 complex regulates developmental gene expression by the decapping of specific development-related transcripts. Component of the nuclear LSM2-LSM8 complex which is involved splicing nuclear mRNAs. LSM2-LSM8 binds directly to the U6 small nuclear RNAs (snRNAs) and is essential for accurate splicing of selected development-related mRNAs through the stabilization of the spliceosomal U6 snRNA. Plays a critical role in the regulation of development-related gene expression. This Arabidopsis thaliana (Mouse-ear cress) protein is Sm-like protein LSM2.